The chain runs to 436 residues: UDP-N-acetylmuramate--L-alanine ligase (436 aa).

Residue 108–114 (GAHGKTS) coordinates ATP.

The protein belongs to the MurCDEF family.

The protein localises to the cytoplasm. It carries out the reaction UDP-N-acetyl-alpha-D-muramate + L-alanine + ATP = UDP-N-acetyl-alpha-D-muramoyl-L-alanine + ADP + phosphate + H(+). It participates in cell wall biogenesis; peptidoglycan biosynthesis. Its function is as follows. Cell wall formation. The sequence is that of UDP-N-acetylmuramate--L-alanine ligase from Bacillus cytotoxicus (strain DSM 22905 / CIP 110041 / 391-98 / NVH 391-98).